Reading from the N-terminus, the 279-residue chain is Proto-oncogene FRAT1 (279 aa).

Disordered regions lie at residues 1–24 (MPCRREEEEEAGEEAEGEEEEEDS) and 56–76 (AQHSPASPCGPPGAPLRAPGP). Positions 7–24 (EEEEAGEEAEGEEEEEDS) are enriched in acidic residues. Ser88 carries the post-translational modification Phosphoserine. Disordered regions lie at residues 136 to 200 (GPSA…DDPH) and 228 to 279 (RAKL…VPGS). Residues 198-220 (DPHRLLQQLVLSGNLIKEAVRRL) are involved in GSK-3 binding. 2 positions are modified to phosphoserine: Ser249 and Ser252.

The protein belongs to the GSK-3-binding protein family. As to quaternary structure, binds DVL1. Binds GSK-3 and prevent GSK-3-dependent phosphorylation. In terms of processing, phosphorylated.

The protein resides in the cytoplasm. Its function is as follows. Positively regulates the Wnt signaling pathway by stabilizing beta-catenin through the association with GSK-3. May play a role in tumor progression and collaborate with PIM1 and MYC in lymphomagenesis. The chain is Proto-oncogene FRAT1 (FRAT1) from Homo sapiens (Human).